The primary structure comprises 338 residues: Formamidase (338 aa).

The CN hydrolase domain occupies 14–257 (VGIGLVQLQL…NEIITAEVRP (244 aa)). Glutamate 60 serves as the catalytic Proton acceptor. Lysine 129 serves as the catalytic Proton donor. Residue cysteine 162 is the Nucleophile of the active site.

The protein belongs to the carbon-nitrogen hydrolase superfamily. Aliphatic amidase family.

The catalysed reaction is formamide + H2O = formate + NH4(+). Its function is as follows. Is an aliphatic amidase with a restricted substrate specificity, as it only hydrolyzes formamide. The protein is Formamidase of Allorhizobium ampelinum (strain ATCC BAA-846 / DSM 112012 / S4) (Agrobacterium vitis (strain S4)).